Here is an 82-residue protein sequence, read N- to C-terminus: Sodium channel neurotoxin MeuNaTxalpha-3 (82 aa).

The signal sequence occupies residues 1–8 (LVMAGVES). The 71-residue stretch at 10 to 80 (RDGHIARNNN…VPIKVPGDCH (71 aa)) folds into the LCN-type CS-alpha/beta domain. Disulfide bonds link cysteine 20–cysteine 79, cysteine 24–cysteine 52, cysteine 38–cysteine 62, and cysteine 42–cysteine 64.

In terms of tissue distribution, expressed by the venom gland.

Its subcellular location is the secreted. Functionally, alpha toxins bind voltage-independently at site-3 of sodium channels (Nav) and inhibit the inactivation of the activated channels, thereby blocking neuronal transmission. The polypeptide is Sodium channel neurotoxin MeuNaTxalpha-3 (Mesobuthus eupeus (Lesser Asian scorpion)).